The chain runs to 287 residues: ATP synthase gamma chain (287 aa).

It belongs to the ATPase gamma chain family. In terms of assembly, F-type ATPases have 2 components, CF(1) - the catalytic core - and CF(0) - the membrane proton channel. CF(1) has five subunits: alpha(3), beta(3), gamma(1), delta(1), epsilon(1). CF(0) has three main subunits: a, b and c.

Its subcellular location is the cell inner membrane. Functionally, produces ATP from ADP in the presence of a proton gradient across the membrane. The gamma chain is believed to be important in regulating ATPase activity and the flow of protons through the CF(0) complex. In Azotobacter vinelandii (strain DJ / ATCC BAA-1303), this protein is ATP synthase gamma chain.